The following is a 501-amino-acid chain: Geissoschizine oxidase (501 aa).

A helical membrane pass occupies residues 1–21; that stretch reads MEFSFSSPLLYILYFLLFFIV. Cys-442 is a binding site for heme.

The protein belongs to the cytochrome P450 family. It depends on heme as a cofactor.

It localises to the membrane. It carries out the reaction (19E)-geissoschizine + reduced [NADPH--hemoprotein reductase] + O2 = akuammicine + formate + oxidized [NADPH--hemoprotein reductase] + H2O + H(+). Its pathway is alkaloid biosynthesis. A cytochrome P450 monooxygenase involved in the biosynthesis of strychnos monoterpene indole alkaloids (MIAs) natural products, compounds with effects on glucose absorption. Catalyzes the conversion of geissoschizine to akuammicine. This Alstonia scholaris (Dogbane) protein is Geissoschizine oxidase.